A 674-amino-acid chain; its full sequence is Probable L-type lectin-domain containing receptor kinase II.1 (674 aa).

The first 24 residues, 1-24, serve as a signal peptide directing secretion; that stretch reads MAGVLGSVVFWLIIGIHVTFLVFA. Topologically, residues 25-301 are extracellular; sequence QEGDHFVYYD…PSPKRFPLKE (277 aa). The segment at 28–274 is legume-lectin like; it reads DHFVYYDFRN…NQYILGWSFK (247 aa). Residues Asn57, Asn117, Asn133, Asn185, Asn210, and Asn242 are each glycosylated (N-linked (GlcNAc...) asparagine). Residues 302-322 traverse the membrane as a helical segment; that stretch reads VLGATISTIAFLTLGGIVYLY. Residues 323 to 674 are Cytoplasmic-facing; it reads KKKKYAEVLE…EDVTVLFGGR (352 aa). A Protein kinase domain is found at 355-633; the sequence is FRENQLLGAG…LEGNVSVPAI (279 aa). ATP is bound by residues 361–369 and Lys383; that span reads LGAGGFGKV. The active-site Proton acceptor is the Asp480.

It in the C-terminal section; belongs to the protein kinase superfamily. Ser/Thr protein kinase family. The protein in the N-terminal section; belongs to the leguminous lectin family.

It localises to the cell membrane. The enzyme catalyses L-seryl-[protein] + ATP = O-phospho-L-seryl-[protein] + ADP + H(+). It carries out the reaction L-threonyl-[protein] + ATP = O-phospho-L-threonyl-[protein] + ADP + H(+). The chain is Probable L-type lectin-domain containing receptor kinase II.1 (LECRK21) from Arabidopsis thaliana (Mouse-ear cress).